A 634-amino-acid chain; its full sequence is Phospholipase B (634 aa).

The signal sequence occupies residues 1-19 (MSIITTAFALSLLATTAFA). The region spanning 46 to 569 (DCPSNVTWIR…DTWCWAGDDN (524 aa)) is the PLA2c domain. 17 N-linked (GlcNAc...) asparagine glycosylation sites follow: Asn50, Asn56, Asn122, Asn231, Asn246, Asn269, Asn311, Asn340, Asn384, Asn430, Asn478, Asn498, Asn525, Asn550, Asn569, Asn591, and Asn603.

This sequence belongs to the lysophospholipase family. N-glycosylated.

Its subcellular location is the secreted. The catalysed reaction is a 1-acyl-sn-glycero-3-phosphocholine + H2O = sn-glycerol 3-phosphocholine + a fatty acid + H(+). Exhibits phospholipase B (PLB), lysophospholipase (LPL) and lysophospholipase/transacylase (LPTA) activities. The chain is Phospholipase B (PLB1) from Cryptococcus neoformans var. neoformans serotype D (strain JEC21 / ATCC MYA-565) (Filobasidiella neoformans).